We begin with the raw amino-acid sequence, 268 residues long: Inositol polyphosphate multikinase (268 aa).

Residues lysine 27, 86–88 (ENI), and aspartate 99 contribute to the ATP site. Residue 127–135 (TSGSLGFRI) participates in substrate binding. Aspartate 235 lines the ATP pocket.

Belongs to the inositol phosphokinase (IPK) family.

It is found in the cytoplasm. It localises to the nucleus. It catalyses the reaction 1D-myo-inositol 1,4,5-trisphosphate + 2 ATP = 1D-myo-inositol 1,3,4,5,6-pentakisphosphate + 2 ADP + 2 H(+). The enzyme catalyses 1D-myo-inositol 1,4,5-trisphosphate + ATP = 1D-myo-inositol 1,4,5,6-tetrakisphosphate + ADP + H(+). The catalysed reaction is 1D-myo-inositol 1,4,5-trisphosphate + ATP = 1D-myo-inositol 1,3,4,5-tetrakisphosphate + ADP + H(+). It carries out the reaction 1D-myo-inositol 1,4,5,6-tetrakisphosphate + ATP = 1D-myo-inositol 1,3,4,5,6-pentakisphosphate + ADP + H(+). Its function is as follows. Inositol phosphate kinase with both monophosphoinositol and diphosphoinositol polyphosphate synthase activities. Able to phosphorylate inositol 1,4,5-trisphosphate (Ins(1,4,5)P3) on both the carbon-3 and carbon-6 positions to synthesize inositol 1,3,4,5-tetrakisphosphate (Ins(1,3,4,5)P4) and inositol 1,4,5,6-tetrakisphosphate (Ins(1,4,5,6)P4), and then to subsequently phosphorylate and convert either isomer of InsP4 to inositol 1,3,4,5,6-pentakisphosphate (Ins(1,3,4,5,6)P5). Also converts (Ins(1,3,4,5,6)P5) to InsP6. Also has a role in transcription regulation. The catalytic activity is required for PHO gene repression by phosphate and for NCR gene activation in response to nitrogen availability, indicating a role for inositol pyrophosphates in these controls. Inositol polyphosphates may be involved in the regulation of chromatin remodeling of transcription. The protein is Inositol polyphosphate multikinase (arg82) of Schizosaccharomyces pombe (strain 972 / ATCC 24843) (Fission yeast).